The following is a 437-amino-acid chain: tRNA-queuosine alpha-mannosyltransferase (437 aa).

Belongs to the glycosyltransferase group 1 family. Glycosyltransferase 4 subfamily.

The protein resides in the cytoplasm. It localises to the nucleus. The enzyme catalyses queuosine(34) in tRNA(Asp) + GDP-alpha-D-mannose = O-4''-alpha-D-mannosylqueuosine(34) in tRNA(Asp) + GDP + H(+). Its function is as follows. Glycosyltransferase that specifically catalyzes mannosylation of cytoplasmic tRNA(Asp) modified with queuosine at position 34 (queuosine(34)). Mannosylates the cyclopentene moiety of queuosine(34) in tRNA(Asp) to form mannosyl-queuosine(34). Mannosylation of queuosine(34) in tRNA(Asp) is required to slow-down elongation at cognate codons, GAC and GAU, thereby regulating protein translation. The sequence is that of tRNA-queuosine alpha-mannosyltransferase (gtdc1) from Xenopus tropicalis (Western clawed frog).